The sequence spans 357 residues: Isopentenyl-diphosphate delta-isomerase (357 aa).

13–14 (RK) is a substrate binding site. FMN contacts are provided by residues Ser-71, 72 to 74 (SMT), Ser-102, and Asn-131. 102–104 (SMR) provides a ligand contact to substrate. Gln-166 contributes to the substrate binding site. Glu-167 lines the Mg(2+) pocket. Residues Lys-198 and 311 to 312 (AR) each bind FMN.

This sequence belongs to the IPP isomerase type 2 family. Homooctamer. Dimer of tetramers. FMN serves as cofactor. Requires NADPH as cofactor. Mg(2+) is required as a cofactor.

The protein resides in the cytoplasm. The catalysed reaction is isopentenyl diphosphate = dimethylallyl diphosphate. Involved in the biosynthesis of isoprenoids. Catalyzes the 1,3-allylic rearrangement of the homoallylic substrate isopentenyl (IPP) to its allylic isomer, dimethylallyl diphosphate (DMAPP). This is Isopentenyl-diphosphate delta-isomerase from Chlorobium chlorochromatii (strain CaD3).